Here is a 324-residue protein sequence, read N- to C-terminus: Brorin (324 aa).

Positions 1–27 are cleaved as a signal peptide; sequence MPSSSAMAVGALSSSLLVTCCLMVALC. The disordered stretch occupies residues 37–126; the sequence is AQAPEQPGQE…TPQGEPPAAA (90 aa). 2 stretches are compositionally biased toward basic and acidic residues: residues 44–56 and 64–78; these read GQEK…RDSP and RASR…DWKS. Over residues 92–107 the composition is skewed to low complexity; the sequence is KQKQAWAAQGGSAKAA. Residues 114–116 carry the Mediates cell adhesion motif; it reads RGD. VWFC domains lie at 152 to 211 and 215 to 273; these read KGCV…PQCK and NYCE…PICK.

In terms of assembly, peripherally associated with AMPAR complex. AMPAR complex consists of an inner core made of 4 pore-forming GluA/GRIA proteins (GRIA1, GRIA2, GRIA3 and GRIA4) and 4 major auxiliary subunits arranged in a twofold symmetry. One of the two pairs of distinct binding sites is occupied either by CNIH2, CNIH3 or CACNG2, CACNG3. The other harbors CACNG2, CACNG3, CACNG4, CACNG8 or GSG1L. This inner core of AMPAR complex is complemented by outer core constituents binding directly to the GluA/GRIA proteins at sites distinct from the interaction sites of the inner core constituents. Outer core constituents include at least PRRT1, PRRT2, CKAMP44/SHISA9, FRRS1L and NRN1. The proteins of the inner and outer core serve as a platform for other, more peripherally associated AMPAR constituents, including VWC2. Alone or in combination, these auxiliary subunits control the gating and pharmacology of the AMPAR complex and profoundly impact their biogenesis and protein processing. As to expression, predominantly expressed in the brain (at protein level). It is expressed in the neurons but not the glial cells.

It localises to the secreted. Its subcellular location is the extracellular space. It is found in the extracellular matrix. The protein localises to the basement membrane. The protein resides in the synapse. In terms of biological role, BMP antagonist which may play a role in neural development. Promotes cell adhesion. This is Brorin (Vwc2) from Mus musculus (Mouse).